The following is a 486-amino-acid chain: Cardiolipin synthase A (486 aa).

2 helical membrane passes run 3 to 23 and 38 to 58; these read TFYTVVSWLVILGYWVLIAGV and MAWLLIIYILPLVGIIAYLSV. PLD phosphodiesterase domains follow at residues 219 to 246 and 399 to 426; these read MDLRQHRKMVMIDNYIAYTGSMNMVDPR and EGGLLHTKSVLVDGELSLVGTVNLDMRS. Residues His-224, Lys-226, Asp-231, His-404, Lys-406, and Asp-411 contribute to the active site.

This sequence belongs to the phospholipase D family. Cardiolipin synthase subfamily. ClsA sub-subfamily.

The protein localises to the cell inner membrane. The catalysed reaction is 2 a 1,2-diacyl-sn-glycero-3-phospho-(1'-sn-glycerol) = a cardiolipin + glycerol. Catalyzes the reversible phosphatidyl group transfer from one phosphatidylglycerol molecule to another to form cardiolipin (CL) (diphosphatidylglycerol) and glycerol. In Salmonella choleraesuis (strain SC-B67), this protein is Cardiolipin synthase A.